The chain runs to 91 residues: DNA-directed RNA polymerase subunit Rpo5 (91 aa).

Belongs to the archaeal Rpo5/eukaryotic RPB5 RNA polymerase subunit family. Part of the RNA polymerase complex.

The protein localises to the cytoplasm. The enzyme catalyses RNA(n) + a ribonucleoside 5'-triphosphate = RNA(n+1) + diphosphate. Its function is as follows. DNA-dependent RNA polymerase (RNAP) catalyzes the transcription of DNA into RNA using the four ribonucleoside triphosphates as substrates. The protein is DNA-directed RNA polymerase subunit Rpo5 of Staphylothermus marinus (strain ATCC 43588 / DSM 3639 / JCM 9404 / F1).